The chain runs to 452 residues: Friend leukemia integration 1 transcription factor (452 aa).

Ser-39 is modified (phosphoserine). A PNT domain is found at 112-198; it reads PPPPNMTTNE…SHLSYLRESS (87 aa). A disordered region spans residues 209–271; sequence DQSSRLSVKE…PYQILGPTSS (63 aa). The span at 215–226 shows a compositional bias: basic and acidic residues; that stretch reads SVKEDPSYDSVR. Positions 248–257 are enriched in polar residues; the sequence is QTISKNTEQR. Positions 281 to 361 form a DNA-binding region, ETS; sequence IQLWQFLLEL…HGKRYAYKFD (81 aa). The tract at residues 433-452 is disordered; it reads NPNVPRHPNTHVPSHLGSYY.

Belongs to the ETS family. Can form homodimers or heterodimers with ETV6/TEL1.

The protein resides in the nucleus. Sequence-specific transcriptional activator. Recognizes the DNA sequence 5'-C[CA]GGAAGT-3'. The sequence is that of Friend leukemia integration 1 transcription factor (FLI1) from Homo sapiens (Human).